The chain runs to 257 residues: 2,3,4,5-tetrahydropyridine-2,6-dicarboxylate N-acetyltransferase (257 aa).

It belongs to the transferase hexapeptide repeat family. DapH subfamily.

It catalyses the reaction (S)-2,3,4,5-tetrahydrodipicolinate + acetyl-CoA + H2O = L-2-acetamido-6-oxoheptanedioate + CoA. The protein operates within amino-acid biosynthesis; L-lysine biosynthesis via DAP pathway; LL-2,6-diaminopimelate from (S)-tetrahydrodipicolinate (acetylase route): step 1/3. Catalyzes the transfer of an acetyl group from acetyl-CoA to tetrahydrodipicolinate. The polypeptide is 2,3,4,5-tetrahydropyridine-2,6-dicarboxylate N-acetyltransferase (Lactococcus lactis subsp. cremoris (strain SK11)).